The following is a 431-amino-acid chain: Glycerol-3-phosphate dehydrogenase [NAD(P)+] (431 aa).

The segment covering 1-19 (MTSANDKSTDTNVDSTQAE) has biased composition (polar residues). The tract at residues 1–25 (MTSANDKSTDTNVDSTQAEQKMAEK) is disordered. Ser-79, Phe-80, Arg-100, and Lys-173 together coordinate NADPH. Lys-173 and Gly-201 together coordinate sn-glycerol 3-phosphate. Ala-205 provides a ligand contact to NADPH. Sn-glycerol 3-phosphate is bound by residues Lys-256, Asp-309, Ser-319, Arg-320, and Asn-321. The Proton acceptor role is filled by Lys-256. Arg-320 contacts NADPH. Glu-346 serves as a coordination point for NADPH.

It belongs to the NAD-dependent glycerol-3-phosphate dehydrogenase family.

It localises to the cytoplasm. The catalysed reaction is sn-glycerol 3-phosphate + NAD(+) = dihydroxyacetone phosphate + NADH + H(+). It carries out the reaction sn-glycerol 3-phosphate + NADP(+) = dihydroxyacetone phosphate + NADPH + H(+). It participates in membrane lipid metabolism; glycerophospholipid metabolism. In terms of biological role, catalyzes the reduction of the glycolytic intermediate dihydroxyacetone phosphate (DHAP) to sn-glycerol 3-phosphate (G3P), the key precursor for phospholipid synthesis. The polypeptide is Glycerol-3-phosphate dehydrogenase [NAD(P)+] (Psychrobacter arcticus (strain DSM 17307 / VKM B-2377 / 273-4)).